Reading from the N-terminus, the 291-residue chain is 4-hydroxy-tetrahydrodipicolinate synthase (291 aa).

Residue Thr44 coordinates pyruvate. The Proton donor/acceptor role is filled by Tyr132. Catalysis depends on Lys160, which acts as the Schiff-base intermediate with substrate. Residue Ile202 coordinates pyruvate.

Belongs to the DapA family. In terms of assembly, homotetramer; dimer of dimers.

It is found in the cytoplasm. The catalysed reaction is L-aspartate 4-semialdehyde + pyruvate = (2S,4S)-4-hydroxy-2,3,4,5-tetrahydrodipicolinate + H2O + H(+). Its pathway is amino-acid biosynthesis; L-lysine biosynthesis via DAP pathway; (S)-tetrahydrodipicolinate from L-aspartate: step 3/4. Functionally, catalyzes the condensation of (S)-aspartate-beta-semialdehyde [(S)-ASA] and pyruvate to 4-hydroxy-tetrahydrodipicolinate (HTPA). The protein is 4-hydroxy-tetrahydrodipicolinate synthase of Rhizorhabdus wittichii (strain DSM 6014 / CCUG 31198 / JCM 15750 / NBRC 105917 / EY 4224 / RW1) (Sphingomonas wittichii).